A 299-amino-acid polypeptide reads, in one-letter code: ATP phosphoribosyltransferase (299 aa).

Belongs to the ATP phosphoribosyltransferase family. Long subfamily. In terms of assembly, equilibrium between an active dimeric form, an inactive hexameric form and higher aggregates. Interconversion between the various forms is largely reversible and is influenced by the natural substrates and inhibitors of the enzyme. Mg(2+) is required as a cofactor.

It localises to the cytoplasm. It carries out the reaction 1-(5-phospho-beta-D-ribosyl)-ATP + diphosphate = 5-phospho-alpha-D-ribose 1-diphosphate + ATP. Its pathway is amino-acid biosynthesis; L-histidine biosynthesis; L-histidine from 5-phospho-alpha-D-ribose 1-diphosphate: step 1/9. With respect to regulation, feedback inhibited by histidine. Catalyzes the condensation of ATP and 5-phosphoribose 1-diphosphate to form N'-(5'-phosphoribosyl)-ATP (PR-ATP). Has a crucial role in the pathway because the rate of histidine biosynthesis seems to be controlled primarily by regulation of HisG enzymatic activity. This chain is ATP phosphoribosyltransferase, found in Buchnera aphidicola subsp. Acyrthosiphon pisum (strain 5A).